A 338-amino-acid polypeptide reads, in one-letter code: Queuosine 5'-phosphate N-glycosylase/hydrolase (338 aa).

M1 carries the post-translational modification N-acetylmethionine. H51, F235, D237, D311, Y312, and D316 together coordinate queuine. Catalysis depends on D237, which acts as the Nucleophile or transition state stabilizer.

This sequence belongs to the QNG1 protein family. Highly expressed in liver.

It catalyses the reaction queuosine 5'-phosphate + H2O = queuine + D-ribose 5-phosphate. Functionally, catalyzes the hydrolysis of queuosine 5'-phosphate, releasing the nucleobase queuine (q). Is required for salvage of queuine from exogenous queuosine (Q) that is imported and then converted to queuosine 5'-phosphate intracellularly. The polypeptide is Queuosine 5'-phosphate N-glycosylase/hydrolase (Mus musculus (Mouse)).